A 160-amino-acid chain; its full sequence is Protein cornichon homolog 3 (160 aa).

At 1–10 the chain is on the cytoplasmic side; the sequence is MAFTFAAFCY. A helical membrane pass occupies residues 11-31; that stretch reads MLSLVLCAALIFFAIWHIIAF. The Lumenal segment spans residues 32–72; the sequence is DELRTDFKSPIDQCNPVHARERLRNIERICFLLRKLVLPEY. The helical transmembrane segment at 73–93 threads the bilayer; the sequence is SIHSLFCVMFLCAQEWLTLGL. Over 94–138 the chain is Cytoplasmic; it reads NVPLLFYHFWRYFHCPADSSELAYDPPVVMNADTLSYCQKEAWCK. The helical transmembrane segment at 139–159 threads the bilayer; the sequence is LAFYLLSFFYYLYCMIYTLVS. Position 160 (Ser-160) is a topological domain, lumenal.

This sequence belongs to the cornichon family. Acts as an auxiliary subunit for AMPA-selective glutamate receptors (AMPARs). Found in a complex with GRIA1, GRIA2, GRIA3, GRIA4, CNIH2, CACNG2, CACNG3, CACNG4, CACNG5, CACNG7 and CACNG8. Brain. Expressed in the neocortex, hippocampal formation, and cerebellum (at protein level).

It localises to the postsynaptic cell membrane. Regulates the trafficking and gating properties of AMPA-selective glutamate receptors (AMPARs). Promotes their targeting to the cell membrane and synapses and modulates their gating properties by regulating their rates of activation, deactivation and desensitization. The polypeptide is Protein cornichon homolog 3 (Cnih3) (Rattus norvegicus (Rat)).